The primary structure comprises 451 residues: tRNA-2-methylthio-N(6)-dimethylallyladenosine synthase (451 aa).

An MTTase N-terminal domain is found at 11–127; it reads RHYHITTFGC…LEDLLQQVFD (117 aa). Positions 20, 56, 90, 162, 166, and 169 each coordinate [4Fe-4S] cluster. Residues 148–385 enclose the Radical SAM core domain; sequence RDSTITAWVN…NHLVAQKAAE (238 aa). A TRAM domain is found at 388–451; sequence QRYLGRIEEV…RAFSLTGEIV (64 aa).

Belongs to the methylthiotransferase family. MiaB subfamily. Monomer. The cofactor is [4Fe-4S] cluster.

Its subcellular location is the cytoplasm. It carries out the reaction N(6)-dimethylallyladenosine(37) in tRNA + (sulfur carrier)-SH + AH2 + 2 S-adenosyl-L-methionine = 2-methylsulfanyl-N(6)-dimethylallyladenosine(37) in tRNA + (sulfur carrier)-H + 5'-deoxyadenosine + L-methionine + A + S-adenosyl-L-homocysteine + 2 H(+). Its function is as follows. Catalyzes the methylthiolation of N6-(dimethylallyl)adenosine (i(6)A), leading to the formation of 2-methylthio-N6-(dimethylallyl)adenosine (ms(2)i(6)A) at position 37 in tRNAs that read codons beginning with uridine. This Rippkaea orientalis (strain PCC 8801 / RF-1) (Cyanothece sp. (strain PCC 8801)) protein is tRNA-2-methylthio-N(6)-dimethylallyladenosine synthase.